Here is a 329-residue protein sequence, read N- to C-terminus: Major outer membrane protein P.IB (329 aa).

Residues 1–19 form the signal peptide; the sequence is MKKSLIALTLAALPVAAMA.

It belongs to the Gram-negative porin family. As to quaternary structure, homotrimer.

The protein localises to the cell outer membrane. In terms of biological role, serves as a slightly cation selective porin. This chain is Major outer membrane protein P.IB (porB), found in Neisseria meningitidis serogroup A / serotype 4A (strain DSM 15465 / Z2491).